Consider the following 213-residue polypeptide: Uridine kinase (213 aa).

ATP is bound at residue 15 to 22 (GASASGKS).

It belongs to the uridine kinase family.

Its subcellular location is the cytoplasm. The enzyme catalyses uridine + ATP = UMP + ADP + H(+). It catalyses the reaction cytidine + ATP = CMP + ADP + H(+). The protein operates within pyrimidine metabolism; CTP biosynthesis via salvage pathway; CTP from cytidine: step 1/3. It participates in pyrimidine metabolism; UMP biosynthesis via salvage pathway; UMP from uridine: step 1/1. The protein is Uridine kinase of Escherichia fergusonii (strain ATCC 35469 / DSM 13698 / CCUG 18766 / IAM 14443 / JCM 21226 / LMG 7866 / NBRC 102419 / NCTC 12128 / CDC 0568-73).